A 340-amino-acid polypeptide reads, in one-letter code: Guanine nucleotide-binding protein G(I)/G(S)/G(T) subunit beta-3 (340 aa).

WD repeat units follow at residues 53-83 (GHLA…IVWD), 95-125 (LRSS…SIYS), 141-170 (AHTG…ALWD), 182-212 (GHTG…KLWD), 224-254 (GHES…RLFD), 268-298 (SIIC…NIWD), and 310-340 (GHDN…KVWN).

It belongs to the WD repeat G protein beta family. G proteins are composed of 3 units, alpha, beta and gamma. Interacts with RASD2.

Its subcellular location is the cytoplasm. It localises to the perinuclear region. Functionally, guanine nucleotide-binding proteins (G proteins) are involved as a modulator or transducer in various transmembrane signaling systems. The beta and gamma chains are required for the GTPase activity, for replacement of GDP by GTP, and for G protein-effector interaction. This Canis lupus familiaris (Dog) protein is Guanine nucleotide-binding protein G(I)/G(S)/G(T) subunit beta-3 (GNB3).